The sequence spans 426 residues: Glutamyl-tRNA reductase (426 aa).

Substrate-binding positions include 49 to 52 (TCNR), Ser-107, 112 to 114 (EPQ), and Gln-118. Cys-50 acts as the Nucleophile in catalysis. 187–192 (GAGETI) contributes to the NADP(+) binding site.

It belongs to the glutamyl-tRNA reductase family. Homodimer.

The enzyme catalyses (S)-4-amino-5-oxopentanoate + tRNA(Glu) + NADP(+) = L-glutamyl-tRNA(Glu) + NADPH + H(+). The protein operates within porphyrin-containing compound metabolism; protoporphyrin-IX biosynthesis; 5-aminolevulinate from L-glutamyl-tRNA(Glu): step 1/2. Functionally, catalyzes the NADPH-dependent reduction of glutamyl-tRNA(Glu) to glutamate 1-semialdehyde (GSA). The protein is Glutamyl-tRNA reductase of Ectopseudomonas mendocina (strain ymp) (Pseudomonas mendocina).